The chain runs to 261 residues: Hydroxyethylthiazole kinase (261 aa).

Methionine 45 is a binding site for substrate. ATP-binding residues include arginine 121 and serine 167. Glycine 194 serves as a coordination point for substrate.

This sequence belongs to the Thz kinase family. The cofactor is Mg(2+).

The enzyme catalyses 5-(2-hydroxyethyl)-4-methylthiazole + ATP = 4-methyl-5-(2-phosphooxyethyl)-thiazole + ADP + H(+). It functions in the pathway cofactor biosynthesis; thiamine diphosphate biosynthesis; 4-methyl-5-(2-phosphoethyl)-thiazole from 5-(2-hydroxyethyl)-4-methylthiazole: step 1/1. Functionally, catalyzes the phosphorylation of the hydroxyl group of 4-methyl-5-beta-hydroxyethylthiazole (THZ). The protein is Hydroxyethylthiazole kinase of Vibrio atlanticus (strain LGP32) (Vibrio splendidus (strain Mel32)).